The sequence spans 146 residues: Tol-Pal system protein TolR (146 aa).

Residues 16 to 36 traverse the membrane as a helical segment; that stretch reads VVPYIDVMLVLLVIFMVTAPM.

Belongs to the ExbD/TolR family. The Tol-Pal system is composed of five core proteins: the inner membrane proteins TolA, TolQ and TolR, the periplasmic protein TolB and the outer membrane protein Pal. They form a network linking the inner and outer membranes and the peptidoglycan layer.

It is found in the cell inner membrane. In terms of biological role, part of the Tol-Pal system, which plays a role in outer membrane invagination during cell division and is important for maintaining outer membrane integrity. In Pseudomonas aeruginosa (strain ATCC 15692 / DSM 22644 / CIP 104116 / JCM 14847 / LMG 12228 / 1C / PRS 101 / PAO1), this protein is Tol-Pal system protein TolR.